The following is a 171-amino-acid chain: Ribosome maturation factor RimM (171 aa).

A PRC barrel domain is found at 97 to 169; it reads DGEFYYHEII…RVDVDIMEGL (73 aa).

It belongs to the RimM family. As to quaternary structure, binds ribosomal protein uS19.

Its subcellular location is the cytoplasm. In terms of biological role, an accessory protein needed during the final step in the assembly of 30S ribosomal subunit, possibly for assembly of the head region. Essential for efficient processing of 16S rRNA. May be needed both before and after RbfA during the maturation of 16S rRNA. It has affinity for free ribosomal 30S subunits but not for 70S ribosomes. This is Ribosome maturation factor RimM from Lactococcus lactis subsp. cremoris (strain SK11).